The following is an 899-amino-acid chain: Protein translocase subunit SecA (899 aa).

ATP-binding positions include Gln-87, 105-109 (GEGKT), and Asp-516. The Zn(2+) site is built by Cys-884, Cys-886, Cys-895, and His-896.

Belongs to the SecA family. Monomer and homodimer. Part of the essential Sec protein translocation apparatus which comprises SecA, SecYEG and auxiliary proteins SecDF. Other proteins may also be involved. Zn(2+) serves as cofactor.

Its subcellular location is the cell inner membrane. The protein localises to the cytoplasm. It catalyses the reaction ATP + H2O + cellular proteinSide 1 = ADP + phosphate + cellular proteinSide 2.. Part of the Sec protein translocase complex. Interacts with the SecYEG preprotein conducting channel. Has a central role in coupling the hydrolysis of ATP to the transfer of proteins into and across the cell membrane, serving as an ATP-driven molecular motor driving the stepwise translocation of polypeptide chains across the membrane. This is Protein translocase subunit SecA from Borreliella afzelii (strain PKo) (Borrelia afzelii).